A 297-amino-acid polypeptide reads, in one-letter code: Indole-3-glycerol phosphate synthase (297 aa).

The protein belongs to the TrpC family.

It carries out the reaction 1-(2-carboxyphenylamino)-1-deoxy-D-ribulose 5-phosphate + H(+) = (1S,2R)-1-C-(indol-3-yl)glycerol 3-phosphate + CO2 + H2O. It functions in the pathway amino-acid biosynthesis; L-tryptophan biosynthesis; L-tryptophan from chorismate: step 4/5. The sequence is that of Indole-3-glycerol phosphate synthase from Trichodesmium erythraeum (strain IMS101).